A 395-amino-acid chain; its full sequence is uncharacterized protein (395 aa).

Residues 182–238 (KKLEDILSTIAEIEDSIELEKILSLDQFLKSKLSNIKITNNQIDEAKAEFKEMFNKK) adopt a coiled-coil conformation.

This is an uncharacterized protein from Acanthamoeba polyphaga (Amoeba).